The chain runs to 433 residues: Enolase (433 aa).

A (2R)-2-phosphoglycerate-binding site is contributed by Gln167. Glu209 acts as the Proton donor in catalysis. 3 residues coordinate Mg(2+): Asp246, Glu291, and Asp318. Positions 343, 372, 373, and 394 each coordinate (2R)-2-phosphoglycerate. Residue Lys343 is the Proton acceptor of the active site.

It belongs to the enolase family. Component of the RNA degradosome, a multiprotein complex involved in RNA processing and mRNA degradation. It depends on Mg(2+) as a cofactor.

Its subcellular location is the cytoplasm. It is found in the secreted. The protein localises to the cell surface. It carries out the reaction (2R)-2-phosphoglycerate = phosphoenolpyruvate + H2O. The protein operates within carbohydrate degradation; glycolysis; pyruvate from D-glyceraldehyde 3-phosphate: step 4/5. Its function is as follows. Catalyzes the reversible conversion of 2-phosphoglycerate (2-PG) into phosphoenolpyruvate (PEP). It is essential for the degradation of carbohydrates via glycolysis. This Haemophilus ducreyi (strain 35000HP / ATCC 700724) protein is Enolase.